We begin with the raw amino-acid sequence, 271 residues long: Formamidopyrimidine-DNA glycosylase (271 aa).

Pro2 functions as the Schiff-base intermediate with DNA in the catalytic mechanism. Residue Glu3 is the Proton donor of the active site. The active-site Proton donor; for beta-elimination activity is Lys58. Residues His92, Arg111, and Lys152 each contribute to the DNA site. The FPG-type zinc finger occupies 237–271 (YVYGKVQKPCKICNNIITLIRQNGRSTYFCNACQN). Arg261 serves as the catalytic Proton donor; for delta-elimination activity.

Belongs to the FPG family. As to quaternary structure, monomer. Zn(2+) serves as cofactor.

The enzyme catalyses Hydrolysis of DNA containing ring-opened 7-methylguanine residues, releasing 2,6-diamino-4-hydroxy-5-(N-methyl)formamidopyrimidine.. It catalyses the reaction 2'-deoxyribonucleotide-(2'-deoxyribose 5'-phosphate)-2'-deoxyribonucleotide-DNA = a 3'-end 2'-deoxyribonucleotide-(2,3-dehydro-2,3-deoxyribose 5'-phosphate)-DNA + a 5'-end 5'-phospho-2'-deoxyribonucleoside-DNA + H(+). Involved in base excision repair of DNA damaged by oxidation or by mutagenic agents. Acts as a DNA glycosylase that recognizes and removes damaged bases. Has a preference for oxidized purines, such as 7,8-dihydro-8-oxoguanine (8-oxoG). Has AP (apurinic/apyrimidinic) lyase activity and introduces nicks in the DNA strand. Cleaves the DNA backbone by beta-delta elimination to generate a single-strand break at the site of the removed base with both 3'- and 5'-phosphates. This Wolbachia sp. subsp. Drosophila simulans (strain wRi) protein is Formamidopyrimidine-DNA glycosylase.